Reading from the N-terminus, the 501-residue chain is Mitogen-activated protein kinase MKC1 (501 aa).

In terms of domain architecture, Protein kinase spans 28-339 (FKIVKELGHG…VRDALNHKYL (312 aa)). ATP contacts are provided by residues 34 to 42 (LGHGAYGIV) and Lys-74. Asp-174 functions as the Proton acceptor in the catalytic mechanism. Thr-211 carries the post-translational modification Phosphothreonine. The TXY signature appears at 211–213 (TEY). Tyr-213 carries the post-translational modification Phosphotyrosine. The tract at residues 400-450 (MQKREEQRQEEEEKELLEQQRQFPAQESMDISQTPYNNLETNIGTPQVEDD) is disordered. The span at 422 to 444 (FPAQESMDISQTPYNNLETNIGT) shows a compositional bias: polar residues.

This sequence belongs to the protein kinase superfamily. CMGC Ser/Thr protein kinase family. MAP kinase subfamily. Mg(2+) serves as cofactor. Post-translationally, dually phosphorylated on Thr-211 and Tyr-213, which activates the enzyme.

It catalyses the reaction L-seryl-[protein] + ATP = O-phospho-L-seryl-[protein] + ADP + H(+). The catalysed reaction is L-threonyl-[protein] + ATP = O-phospho-L-threonyl-[protein] + ADP + H(+). Activated by tyrosine and threonine phosphorylation. This is Mitogen-activated protein kinase MKC1 (MKC1) from Candida albicans (Yeast).